Here is a 303-residue protein sequence, read N- to C-terminus: ATP phosphoribosyltransferase (303 aa).

This sequence belongs to the ATP phosphoribosyltransferase family. Long subfamily. Mg(2+) serves as cofactor.

The protein localises to the cytoplasm. It catalyses the reaction 1-(5-phospho-beta-D-ribosyl)-ATP + diphosphate = 5-phospho-alpha-D-ribose 1-diphosphate + ATP. Its pathway is amino-acid biosynthesis; L-histidine biosynthesis; L-histidine from 5-phospho-alpha-D-ribose 1-diphosphate: step 1/9. Its activity is regulated as follows. Feedback inhibited by histidine. Its function is as follows. Catalyzes the condensation of ATP and 5-phosphoribose 1-diphosphate to form N'-(5'-phosphoribosyl)-ATP (PR-ATP). Has a crucial role in the pathway because the rate of histidine biosynthesis seems to be controlled primarily by regulation of HisG enzymatic activity. The sequence is that of ATP phosphoribosyltransferase from Haemophilus influenzae (strain PittEE).